The chain runs to 131 residues: Large ribosomal subunit protein bL17 (131 aa).

This sequence belongs to the bacterial ribosomal protein bL17 family. In terms of assembly, part of the 50S ribosomal subunit. Contacts protein L32.

This chain is Large ribosomal subunit protein bL17, found in Azoarcus sp. (strain BH72).